The primary structure comprises 257 residues: UPF0246 protein RSc2009 (257 aa).

The protein belongs to the UPF0246 family.

The chain is UPF0246 protein RSc2009 from Ralstonia nicotianae (strain ATCC BAA-1114 / GMI1000) (Ralstonia solanacearum).